The sequence spans 80 residues: Metallothionein-like protein type 2, MT2-28 (80 aa).

Belongs to the metallothionein superfamily. Type 15 family.

Functionally, metallothioneins have a high content of cysteine residues that bind various heavy metals. The protein is Metallothionein-like protein type 2, MT2-28 of Brassica juncea (Indian mustard).